A 734-amino-acid chain; its full sequence is MALRFPRFSQGLAQDPTTRRIWFGIATAHDFESHDDITEERLYQNIFASHFGQLAIIFLWTSGNLFHVAWQGNFQSWVQDPLHVRPIAHAIWDPHFGQPAVEAFTRGGALGPVNIAYSGVYQWWYTIGLRTNEDLYTGALFLLFLSAISLIAGWLHLQPKWKPSVSWFKNAESRLNHHLSGLFGVSSLAWTGHLVHVAIPGSRGEYVRWNNFLDVLPHPQGLGPLFTGQWNLYAQNPDSSSHLFGTSQGAGTAILTLLGGFHPQTQSLWLTDMAHHHLAIAFIFLVAGHMYRTNFGIGHSMKDLLEAHIPPGGRLGRGHKGLYDTINNSIHFQLGLALASLGVITSLVAQHMYSLPAYAFIAQDFTTQAALYTHHQYIAGFIMTGAFAHGAIFFIRDYNPEQNEDNVLARMLDHKEAIKSHLSWASLFLGFHTLGLYVHNDVMLAFGTPEKQILIEPIFAQWIQSAHGKTSYGFDVLLSSTNGPAFNAGRSIWLPGWLNAVNENSNSLFLTIGPGDFLVHHAIALGLHTTTLILVKGALDARGSKLMPDKKDFGYSFPCDGPGRGGTCDISAWDAFYLAVFWMLNTIGWVTFYWHWKHITLWQGNVSQFNESSTYLMGWLRDYLWLNSSQLINGYNPFGTNSLSVWAWMFLFGHLVWATGFMFLISWRGYWQELIETLAWAHERTPLANLIRWRDKPVALSIVQARLVGLAHFSVGYIFTYAAFLIASTSGKFG.

The next 8 helical transmembrane spans lie at 46-69 (IFAS…FHVA), 135-158 (LYTG…LHLQ), 175-199 (LNHH…HVAI), 273-291 (MAHH…GHMY), 330-353 (IHFQ…QHMY), 369-395 (AALY…IFFI), 417-439 (AIKS…LYVH), and 517-535 (FLVH…LILV). Residues cysteine 559 and cysteine 568 each contribute to the [4Fe-4S] cluster site. The next 2 helical transmembrane spans lie at 575 to 596 (AFYL…YWHW) and 643 to 665 (LSVW…MFLI). Chlorophyll a is bound by residues histidine 654, methionine 662, and tyrosine 670. Tryptophan 671 serves as a coordination point for phylloquinone. A helical membrane pass occupies residues 707–727 (LVGLAHFSVGYIFTYAAFLIA).

This sequence belongs to the PsaA/PsaB family. The PsaA/B heterodimer binds the P700 chlorophyll special pair and subsequent electron acceptors. PSI consists of a core antenna complex that captures photons, and an electron transfer chain that converts photonic excitation into a charge separation. The eukaryotic PSI reaction center is composed of at least 11 subunits. P700 is a chlorophyll a/chlorophyll a' dimer, A0 is one or more chlorophyll a, A1 is one or both phylloquinones and FX is a shared 4Fe-4S iron-sulfur center. is required as a cofactor.

It localises to the plastid. The protein resides in the chloroplast thylakoid membrane. It carries out the reaction reduced [plastocyanin] + hnu + oxidized [2Fe-2S]-[ferredoxin] = oxidized [plastocyanin] + reduced [2Fe-2S]-[ferredoxin]. Functionally, psaA and PsaB bind P700, the primary electron donor of photosystem I (PSI), as well as the electron acceptors A0, A1 and FX. PSI is a plastocyanin-ferredoxin oxidoreductase, converting photonic excitation into a charge separation, which transfers an electron from the donor P700 chlorophyll pair to the spectroscopically characterized acceptors A0, A1, FX, FA and FB in turn. Oxidized P700 is reduced on the lumenal side of the thylakoid membrane by plastocyanin. The protein is Photosystem I P700 chlorophyll a apoprotein A2 of Chloranthus spicatus (Chulantree).